We begin with the raw amino-acid sequence, 201 residues long: uncharacterized protein (201 aa).

The region spanning 15 to 122 is the Bro-N domain; sequence KNQIQFSTFN…EVLPQIRKTG (108 aa).

This is an uncharacterized protein from Haemophilus influenzae (strain ATCC 51907 / DSM 11121 / KW20 / Rd).